The following is a 766-amino-acid chain: 5-methyltetrahydropteroyltriglutamate--homocysteine methyltransferase (766 aa).

5-methyltetrahydropteroyltri-L-glutamate-binding positions include 16 to 19 (RELK) and lysine 119. Residues 440–442 (IGS) and glutamate 493 each bind L-homocysteine. Residues 440-442 (IGS) and glutamate 493 each bind L-methionine. Residues 524–525 (RC) and tryptophan 570 each bind 5-methyltetrahydropteroyltri-L-glutamate. An L-homocysteine-binding site is contributed by aspartate 608. Aspartate 608 lines the L-methionine pocket. Glutamate 614 is a 5-methyltetrahydropteroyltri-L-glutamate binding site. Histidine 650, cysteine 652, and glutamate 674 together coordinate Zn(2+). The active-site Proton donor is histidine 703. Residue cysteine 735 coordinates Zn(2+).

The protein belongs to the vitamin-B12 independent methionine synthase family. The cofactor is Zn(2+).

The catalysed reaction is 5-methyltetrahydropteroyltri-L-glutamate + L-homocysteine = tetrahydropteroyltri-L-glutamate + L-methionine. It participates in amino-acid biosynthesis; L-methionine biosynthesis via de novo pathway; L-methionine from L-homocysteine (MetE route): step 1/1. In terms of biological role, catalyzes the transfer of a methyl group from 5-methyltetrahydrofolate to homocysteine resulting in methionine formation. The sequence is that of 5-methyltetrahydropteroyltriglutamate--homocysteine methyltransferase from Pseudomonas aeruginosa (strain LESB58).